A 509-amino-acid chain; its full sequence is Lanosterol 14-alpha demethylase (509 aa).

The helical transmembrane segment at 30–50 (GNLLSMLLIACAFTLSLVYLF) threads the bilayer. Cysteine 455 provides a ligand contact to heme.

Belongs to the cytochrome P450 family. Requires heme as cofactor. Post-translationally, ubiquitinated by MARCHF6, leading to proteasomal degradation.

The protein localises to the endoplasmic reticulum membrane. The protein resides in the microsome membrane. It catalyses the reaction a 14alpha-methyl steroid + 3 reduced [NADPH--hemoprotein reductase] + 3 O2 = a Delta(14) steroid + formate + 3 oxidized [NADPH--hemoprotein reductase] + 4 H2O + 4 H(+). The enzyme catalyses lanosterol + 3 reduced [NADPH--hemoprotein reductase] + 3 O2 = 4,4-dimethyl-5alpha-cholesta-8,14,24-trien-3beta-ol + formate + 3 oxidized [NADPH--hemoprotein reductase] + 4 H2O + 4 H(+). The catalysed reaction is 24,25-dihydrolanosterol + 3 reduced [NADPH--hemoprotein reductase] + 3 O2 = 4,4-dimethyl-8,14-cholestadien-3beta-ol + formate + 3 oxidized [NADPH--hemoprotein reductase] + 4 H2O + 4 H(+). It carries out the reaction a 14alpha-methyl steroid + reduced [NADPH--hemoprotein reductase] + O2 = a 14alpha-hydroxymethyl steroid + oxidized [NADPH--hemoprotein reductase] + H2O + H(+). It catalyses the reaction a 14alpha-hydroxymethyl steroid + reduced [NADPH--hemoprotein reductase] + O2 = a 14alpha-formyl steroid + oxidized [NADPH--hemoprotein reductase] + 2 H2O + H(+). The enzyme catalyses a 14alpha-formyl steroid + reduced [NADPH--hemoprotein reductase] + O2 = a Delta(14) steroid + formate + oxidized [NADPH--hemoprotein reductase] + H2O + 2 H(+). The catalysed reaction is lanosterol + reduced [NADPH--hemoprotein reductase] + O2 = 32-hydroxylanosterol + oxidized [NADPH--hemoprotein reductase] + H2O + H(+). It carries out the reaction 32-hydroxylanosterol + reduced [NADPH--hemoprotein reductase] + O2 = 32-oxolanosterol + oxidized [NADPH--hemoprotein reductase] + 2 H2O + H(+). It catalyses the reaction 32-oxolanosterol + reduced [NADPH--hemoprotein reductase] + O2 = 4,4-dimethyl-5alpha-cholesta-8,14,24-trien-3beta-ol + formate + oxidized [NADPH--hemoprotein reductase] + H2O + 2 H(+). The enzyme catalyses 24,25-dihydrolanosterol + reduced [NADPH--hemoprotein reductase] + O2 = 32-hydroxy-24,25-dihydrolanosterol + oxidized [NADPH--hemoprotein reductase] + H2O + H(+). The catalysed reaction is 32-hydroxy-24,25-dihydrolanosterol + reduced [NADPH--hemoprotein reductase] + O2 = 32-oxo-24,25-dihydrolanosterol + oxidized [NADPH--hemoprotein reductase] + 2 H2O + H(+). It carries out the reaction 32-oxo-24,25-dihydrolanosterol + reduced [NADPH--hemoprotein reductase] + O2 = 4,4-dimethyl-8,14-cholestadien-3beta-ol + formate + oxidized [NADPH--hemoprotein reductase] + H2O + 2 H(+). It participates in steroid biosynthesis; zymosterol biosynthesis; zymosterol from lanosterol: step 1/6. With respect to regulation, inhibited by azalanstat. Inhibited by azole antifungal agents ketoconazole, itraconazole and fluconazole. In terms of biological role, sterol 14alpha-demethylase that plays a critical role in the cholesterol biosynthesis pathway, being cholesterol the major sterol component in mammalian membranes as well as a precursor for bile acid and steroid hormone synthesis. Cytochrome P450 monooxygenase that catalyzes the three-step oxidative removal of the 14alpha-methyl group (C-32) of sterols such as lanosterol (lanosta-8,24-dien-3beta-ol) and 24,25-dihydrolanosterol (DHL) in the form of formate, and converts the sterols to 4,4-dimethyl-5alpha-cholesta-8,14,24-trien-3beta-ol and 4,4-dimethyl-8,14-cholestadien-3beta-ol, respectively, which are intermediates of cholesterol biosynthesis. Can also demethylate substrates not intrinsic to mammals, such as eburicol (24-methylene-24,25-dihydrolanosterol), but at a lower rate than DHL. In Pongo abelii (Sumatran orangutan), this protein is Lanosterol 14-alpha demethylase.